We begin with the raw amino-acid sequence, 522 residues long: Colicin-E1 (522 aa).

Disordered regions lie at residues 26 to 52 (NGTP…AAIH) and 136 to 165 (EEKA…REKA). Residues 30–42 (DGSGSGGGGGKGG) show a composition bias toward gly residues. The next 2 membrane-spanning stretches (helical) occupy residues 471 to 487 (AADA…FSLL) and 494 to 510 (IWGI…YIDK).

Belongs to the channel forming colicin family.

Its subcellular location is the cell membrane. In terms of biological role, this colicin is a channel-forming colicin. This class of transmembrane toxins depolarize the cytoplasmic membrane, leading to dissipation of cellular energy. Its function is as follows. Colicins are polypeptide toxins produced by and active against E.coli and closely related bacteria. The sequence is that of Colicin-E1 (cea) from Escherichia coli.